Consider the following 321-residue polypeptide: Cytochrome c biogenesis protein CcsA (321 aa).

Transmembrane regions (helical) follow at residues 1–21 (MIFI…ISVV), 36–56 (LSSS…GLLI), 70–90 (LYES…ILEV), 97–117 (GLGA…TSGL), 143–163 (ILLS…FLII), 229–249 (VIGL…VWAN), 256–276 (WSWD…AIYL), and 290–310 (AIIA…VDLL).

Belongs to the CcmF/CycK/Ccl1/NrfE/CcsA family. As to quaternary structure, may interact with Ccs1.

The protein resides in the plastid. It is found in the chloroplast thylakoid membrane. In terms of biological role, required during biogenesis of c-type cytochromes (cytochrome c6 and cytochrome f) at the step of heme attachment. This chain is Cytochrome c biogenesis protein CcsA, found in Cycas taitungensis (Prince sago).